A 657-amino-acid polypeptide reads, in one-letter code: NADH-quinone oxidoreductase subunit L (657 aa).

Helical transmembrane passes span 5–25 (NICI…GLFL), 32–52 (LAQV…LIIF), 89–109 (IMFI…LGYM), 114–134 (GIIR…MLVS), 138–158 (FLQL…LIGF), 172–192 (AFII…TIIV), 214–234 (IFLH…GCMG), 253–273 (TPVS…FLVA), 285–305 (ILQF…SIAI), 313–333 (IIAY…GVSA), 339–359 (FHLV…GSVI), 381–401 (YGNF…AGFY), 416–436 (FMFI…MKII), 465–485 (LILL…LLAM), 511–531 (LYIK…GIYL), 580–600 (EIYN…FYLG), and 632–652 (VFNY…YFVW).

The protein belongs to the complex I subunit 5 family.

Its subcellular location is the cell membrane. It catalyses the reaction a quinone + NADH + 5 H(+)(in) = a quinol + NAD(+) + 4 H(+)(out). Its function is as follows. NDH-1 shuttles electrons from NADH, via FMN and iron-sulfur (Fe-S) centers, to quinones in the respiratory chain. Couples the redox reaction to proton translocation (for every two electrons transferred, four hydrogen ions are translocated across the cytoplasmic membrane), and thus conserves the redox energy in a proton gradient. This is NADH-quinone oxidoreductase subunit L (nuoL) from Rickettsia conorii (strain ATCC VR-613 / Malish 7).